We begin with the raw amino-acid sequence, 511 residues long: Bifunctional purine biosynthesis protein PurH (511 aa).

Positions 1 to 145 constitute an MGS-like domain; it reads MKRRALVSVS…KNHQHVTVVV (145 aa).

It belongs to the PurH family.

The catalysed reaction is (6R)-10-formyltetrahydrofolate + 5-amino-1-(5-phospho-beta-D-ribosyl)imidazole-4-carboxamide = 5-formamido-1-(5-phospho-D-ribosyl)imidazole-4-carboxamide + (6S)-5,6,7,8-tetrahydrofolate. It carries out the reaction IMP + H2O = 5-formamido-1-(5-phospho-D-ribosyl)imidazole-4-carboxamide. It participates in purine metabolism; IMP biosynthesis via de novo pathway; 5-formamido-1-(5-phospho-D-ribosyl)imidazole-4-carboxamide from 5-amino-1-(5-phospho-D-ribosyl)imidazole-4-carboxamide (10-formyl THF route): step 1/1. Its pathway is purine metabolism; IMP biosynthesis via de novo pathway; IMP from 5-formamido-1-(5-phospho-D-ribosyl)imidazole-4-carboxamide: step 1/1. In Halalkalibacterium halodurans (strain ATCC BAA-125 / DSM 18197 / FERM 7344 / JCM 9153 / C-125) (Bacillus halodurans), this protein is Bifunctional purine biosynthesis protein PurH.